Here is a 633-residue protein sequence, read N- to C-terminus: Basic helix-loop-helix ARNT-like protein 1 (633 aa).

Residues 1-65 (MADQRMDISS…GMDTDKDDQH (65 aa)) are disordered. At Ser-17 the chain carries Phosphoserine; by GSK3-beta. Polar residues predominate over residues 24–33 (ISSSLSTSGM). The Nuclear localization signal signature appears at 36-41 (NRKRKG). The bHLH domain maps to 79–132 (NAREAHSQIEKRRRDKMNSFIDELASLVPTCNAMSRKLDKLTVLRMAVQHMKTL). Ser-85 is subject to Phosphoserine. At Ser-97 the chain carries Phosphoserine; by CK2. The short motif at 149-159 (LSDDELKHLIL) is the Nuclear export signal 1 element. The 73-residue stretch at 150 to 222 (SDDELKHLIL…EQLSSSDTAP (73 aa)) folds into the PAS 1 domain. Lys-259 participates in a covalent cross-link: Glycyl lysine isopeptide (Lys-Gly) (interchain with G-Cter in SUMO2 and SUMO3). A Glycyl lysine isopeptide (Lys-Gly) (interchain with G-Cter in SUMO) cross-link involves residue Lys-266. The 71-residue stretch at 333–403 (PQPVNGEIRV…ECHRQVLQTR (71 aa)) folds into the PAS 2 domain. A Nuclear export signal 2 motif is present at residues 368–376 (LAYLPQELL). The PAC domain occupies 408-451 (TNCYKFKIKDGSFITLRSRWFSFMNPWTKEVEYIVSTNTVVSTN). Disordered stretches follow at residues 472-499 (SVLQ…RAGA) and 518-555 (GSSP…TPDI). Residues 518 to 528 (GSSPSSCGSSP) are compositionally biased toward low complexity. Lys-545 bears the N6-acetyllysine mark.

As to quaternary structure, component of the circadian clock oscillator which includes the CRY1/2 proteins, CLOCK or NPAS2, BMAL1 or BMAL2, CSNK1D and/or CSNK1E, TIMELESS and the PER1/2/3 proteins. Forms a heterodimer with CLOCK. The CLOCK-BMAL1 heterodimer is required for E-box-dependent transactivation, for CLOCK nuclear translocation and degradation, and, for phosphorylation of both CLOCK and BMAL1. Interacts with PER1, PER2, CRY1 and CRY2 and this interaction requires a translocation to the nucleus. Interaction of the CLOCK-BMAL1 heterodimer with PER or CRY inhibits transcription activation. Ubiquitinated, leading to its proteasomal degradation. Deubiquitinated by USP9X. In terms of processing, O-glycosylated; contains O-GlcNAc. O-glycosylation by OGT prevents protein degradation by inhibiting ubiquitination. It also stabilizes the CLOCK-BMAL1 heterodimer thereby increasing CLOCK-BMAL1-mediated transcription of genes in the negative loop of the circadian clock such as PER1/2/3 and CRY1/2. Post-translationally, acetylated on Lys-545 by CLOCK during the repression phase of the circadian cycle. Acetylation facilitates recruitment of CRY1 protein and initiates the repression phase of the circadian cycle. Acetylated at Lys-545 by KAT5 during the activation phase of the cycle, leading to recruitment of the positive transcription elongation factor b (P-TEFb) and BRD4, followed by productive elongation of circadian transcripts. Deacetylated by SIRT1, which may result in decreased protein stability. Phosphorylated upon dimerization with CLOCK. Phosphorylation enhances the transcriptional activity, alters the subcellular localization and decreases the stability of the CLOCK-BMAL1 heterodimer by promoting its degradation. Phosphorylation shows circadian variations in the liver with a peak between CT10 to CT14. Phosphorylation at Ser-97 by CK2 is essential for its nuclear localization, its interaction with CLOCK and controls CLOCK nuclear entry. Dephosphorylation at Ser-85 is important for dimerization with CLOCK and transcriptional activity. In terms of processing, sumoylated on Lys-266 upon dimerization with CLOCK. Predominantly conjugated to poly-SUMO2/3 rather than SUMO1 and the level of these conjugates undergo rhythmic variation, peaking at CT9-CT12. Sumoylation localizes it exclusively to the PML body and promotes its ubiquitination in the PML body, ubiquitin-dependent proteasomal degradation and the transcriptional activity of the CLOCK-BMAL1 heterodimer. Post-translationally, undergoes lysosome-mediated degradation in a time-dependent manner in the liver.

The protein resides in the nucleus. It localises to the cytoplasm. The protein localises to the PML body. In terms of biological role, transcriptional activator which forms a core component of the circadian clock. The circadian clock, an internal time-keeping system, regulates various physiological processes through the generation of approximately 24 hour circadian rhythms in gene expression, which are translated into rhythms in metabolism and behavior. It is derived from the Latin roots 'circa' (about) and 'diem' (day) and acts as an important regulator of a wide array of physiological functions including metabolism, sleep, body temperature, blood pressure, endocrine, immune, cardiovascular, and renal function. Consists of two major components: the central clock, residing in the suprachiasmatic nucleus (SCN) of the brain, and the peripheral clocks that are present in nearly every tissue and organ system. Both the central and peripheral clocks can be reset by environmental cues, also known as Zeitgebers (German for 'timegivers'). The predominant Zeitgeber for the central clock is light, which is sensed by retina and signals directly to the SCN. The central clock entrains the peripheral clocks through neuronal and hormonal signals, body temperature and feeding-related cues, aligning all clocks with the external light/dark cycle. Circadian rhythms allow an organism to achieve temporal homeostasis with its environment at the molecular level by regulating gene expression to create a peak of protein expression once every 24 hours to control when a particular physiological process is most active with respect to the solar day. Transcription and translation of core clock components (CLOCK, NPAS2, BMAL1, BMAL2, PER1, PER2, PER3, CRY1 and CRY2) plays a critical role in rhythm generation, whereas delays imposed by post-translational modifications (PTMs) are important for determining the period (tau) of the rhythms (tau refers to the period of a rhythm and is the length, in time, of one complete cycle). A diurnal rhythm is synchronized with the day/night cycle, while the ultradian and infradian rhythms have a period shorter and longer than 24 hours, respectively. Disruptions in the circadian rhythms contribute to the pathology of cardiovascular diseases, cancer, metabolic syndromes and aging. A transcription/translation feedback loop (TTFL) forms the core of the molecular circadian clock mechanism. Transcription factors, CLOCK or NPAS2 and BMAL1 or BMAL2, form the positive limb of the feedback loop, act in the form of a heterodimer and activate the transcription of core clock genes and clock-controlled genes (involved in key metabolic processes), harboring E-box elements (5'-CACGTG-3') within their promoters. The core clock genes: PER1/2/3 and CRY1/2 which are transcriptional repressors form the negative limb of the feedback loop and interact with the CLOCK|NPAS2-BMAL1|BMAL2 heterodimer inhibiting its activity and thereby negatively regulating their own expression. This heterodimer also activates nuclear receptors NR1D1/2 and RORA/B/G, which form a second feedback loop and which activate and repress BMAL1 transcription, respectively. The preferred binding motif for the CLOCK-BMAL1 heterodimer is 5'-CACGTGA-3', which contains a flanking adenine nucleotide at the 3-prime end of the canonical 6-nucleotide E-box sequence. CLOCK specifically binds to the half-site 5'-CAC-3', while BMAL1 binds to the half-site 5'-GTGA-3'. Essential for the rhythmic interaction of CLOCK with ASS1 and plays a critical role in positively regulating CLOCK-mediated acetylation of ASS1. Plays a role in protecting against lethal sepsis by limiting the expression of immune checkpoint protein CD274 in macrophages in a PKM2-dependent manner. The polypeptide is Basic helix-loop-helix ARNT-like protein 1 (BMAL1) (Tyto alba (Barn owl)).